Here is a 363-residue protein sequence, read N- to C-terminus: 3,4-dihydroxy-2-butanone 4-phosphate synthase (363 aa).

Residues 1–201 (MTLSTAQEII…VADLIEYRNK (201 aa)) form a DHBP synthase region. D-ribulose 5-phosphate is bound by residues 27-28 (RE), Asp32, 140-144 (RAGHT), and Glu164. Glu28 lines the Mg(2+) pocket. Mg(2+) is bound at residue His143. Residues 202–363 (YETMIERISE…GLEIVEYVCS (162 aa)) are GTP cyclohydrolase II-like.

The protein in the N-terminal section; belongs to the DHBP synthase family. It in the C-terminal section; belongs to the GTP cyclohydrolase II family. Requires Mg(2+) as cofactor. It depends on Mn(2+) as a cofactor.

The catalysed reaction is D-ribulose 5-phosphate = (2S)-2-hydroxy-3-oxobutyl phosphate + formate + H(+). It functions in the pathway cofactor biosynthesis; riboflavin biosynthesis; 2-hydroxy-3-oxobutyl phosphate from D-ribulose 5-phosphate: step 1/1. Catalyzes the conversion of D-ribulose 5-phosphate to formate and 3,4-dihydroxy-2-butanone 4-phosphate. The chain is 3,4-dihydroxy-2-butanone 4-phosphate synthase (ribB) from Photobacterium phosphoreum.